Here is a 327-residue protein sequence, read N- to C-terminus: S-adenosylmethionine/S-adenosylhomocysteine transporter (327 aa).

Transmembrane regions (helical) follow at residues 22–42 (CDMA…SFAL), 53–73 (LFVT…LLLC), 85–105 (IMPI…LEFI), 114–134 (TACF…YVQL), 143–163 (LGGL…GGSE), 165–185 (VAEW…ATCL), 202–222 (SLSM…LSLI), 240–260 (LFLQ…YNLF), 271–291 (FLSF…WLLL), and 294–314 (SFPP…RLIY). Residues 34-157 (FIWSSSFALS…LGLVSYLVYL (124 aa)) form the EamA 1 domain. The region spanning 189–313 (GWTLLRKLGR…GFMVLGCRLI (125 aa)) is the EamA 2 domain.

The protein belongs to the drug/metabolite transporter (DMT) superfamily. 10 TMS drug/metabolite exporter (DME) (TC 2.A.7.3) family.

The protein localises to the cell membrane. Its function is as follows. Transports S-adenosylmethionine (SAM) and S-adenosylhomocysteine (SAH). Allows bacteria to acquire SAM from the eukaryotic host cell and to likely remove the toxic by-product SAH. In Chlamydia trachomatis serovar D (strain ATCC VR-885 / DSM 19411 / UW-3/Cx), this protein is S-adenosylmethionine/S-adenosylhomocysteine transporter.